Reading from the N-terminus, the 871-residue chain is Leucine--tRNA ligase (871 aa).

A 'HIGH' region motif is present at residues 43-53 (PYPSGRIHIGH). The short motif at 629-633 (KMSKS) is the 'KMSKS' region element. Lys632 contributes to the ATP binding site.

It belongs to the class-I aminoacyl-tRNA synthetase family.

The protein resides in the cytoplasm. It catalyses the reaction tRNA(Leu) + L-leucine + ATP = L-leucyl-tRNA(Leu) + AMP + diphosphate. The polypeptide is Leucine--tRNA ligase (Chelativorans sp. (strain BNC1)).